Here is a 957-residue protein sequence, read N- to C-terminus: Glycine dehydrogenase (decarboxylating) (957 aa).

K702 carries the N6-(pyridoxal phosphate)lysine modification.

This sequence belongs to the GcvP family. In terms of assembly, the glycine cleavage system is composed of four proteins: P, T, L and H. Pyridoxal 5'-phosphate is required as a cofactor.

The catalysed reaction is N(6)-[(R)-lipoyl]-L-lysyl-[glycine-cleavage complex H protein] + glycine + H(+) = N(6)-[(R)-S(8)-aminomethyldihydrolipoyl]-L-lysyl-[glycine-cleavage complex H protein] + CO2. In terms of biological role, the glycine cleavage system catalyzes the degradation of glycine. The P protein binds the alpha-amino group of glycine through its pyridoxal phosphate cofactor; CO(2) is released and the remaining methylamine moiety is then transferred to the lipoamide cofactor of the H protein. This chain is Glycine dehydrogenase (decarboxylating), found in Synechococcus sp. (strain RCC307).